We begin with the raw amino-acid sequence, 92 residues long: Small ribosomal subunit protein uS19 (92 aa).

It belongs to the universal ribosomal protein uS19 family.

In terms of biological role, protein S19 forms a complex with S13 that binds strongly to the 16S ribosomal RNA. This Gloeothece citriformis (strain PCC 7424) (Cyanothece sp. (strain PCC 7424)) protein is Small ribosomal subunit protein uS19.